A 371-amino-acid polypeptide reads, in one-letter code: Alanine racemase (371 aa).

Catalysis depends on lysine 35, which acts as the Proton acceptor; specific for D-alanine. Lysine 35 carries the post-translational modification N6-(pyridoxal phosphate)lysine. Arginine 130 contacts substrate. The Proton acceptor; specific for L-alanine role is filled by tyrosine 256. Residue methionine 304 coordinates substrate.

The protein belongs to the alanine racemase family. Pyridoxal 5'-phosphate serves as cofactor.

It carries out the reaction L-alanine = D-alanine. Its pathway is amino-acid biosynthesis; D-alanine biosynthesis; D-alanine from L-alanine: step 1/1. Its function is as follows. Catalyzes the interconversion of L-alanine and D-alanine. May also act on other amino acids. This is Alanine racemase (alr) from Verminephrobacter eiseniae (strain EF01-2).